The sequence spans 146 residues: uncharacterized protein (146 aa).

2 disordered regions span residues 1-33 and 50-70; these read MATF…GSYR and QHWR…SWEG.

This is an uncharacterized protein from Homo sapiens (Human).